The chain runs to 469 residues: Uronate isomerase (469 aa).

This sequence belongs to the metallo-dependent hydrolases superfamily. Uronate isomerase family.

It carries out the reaction D-glucuronate = D-fructuronate. The enzyme catalyses aldehydo-D-galacturonate = keto-D-tagaturonate. Its pathway is carbohydrate metabolism; pentose and glucuronate interconversion. This is Uronate isomerase from Mesorhizobium japonicum (strain LMG 29417 / CECT 9101 / MAFF 303099) (Mesorhizobium loti (strain MAFF 303099)).